The following is a 950-amino-acid chain: Coiled-coil domain-containing protein 80 (950 aa).

A signal peptide spans 1 to 21 (MTWRMGPRFTMLLAMWLVCGS). Disordered regions lie at residues 28 to 64 (TIRG…IERS), 88 to 119 (PTEP…EMIR), and 289 to 609 (QVVA…QSPK). Composition is skewed to basic and acidic residues over residues 104–119 (PEQR…EMIR) and 308–317 (SEKKKEDPRR). Over residues 348-374 (PRATTLPPAPATTVTRSTSRAVTVAAR) the composition is skewed to low complexity. The segment covering 376–385 (MTTTAFPTTQ) has biased composition (polar residues). A compositionally biased stretch (basic and acidic residues) spans 418–428 (SRKDQHRERPQ). Over residues 435–454 (KATSLESFTNAPPTTISEPS) the composition is skewed to polar residues. Basic and acidic residues-rich tracts occupy residues 462 to 478 (RFRD…HRDP), 487 to 499 (PAKE…KAQD), and 538 to 582 (KKHE…EKEK). Glycyl lysine isopeptide (Lys-Gly) (interchain with G-Cter in SUMO2) cross-links involve residues K545 and K548. The stretch at 560 to 587 (DKLLKSEKQMKKSEKKSKQEKEKSKKKK) forms a coiled coil. Polar residues predominate over residues 598 to 609 (KPTNKHFTQSPK).

This sequence belongs to the CCDC80 family. As to quaternary structure, binds to various extracellular matrix proteins. Post-translationally, phosphorylated. In terms of tissue distribution, expressed in dermal papilla and dermal fibroblasts (at protein level). Expressed in heart, thymus, placenta, pancreas, colon, epithelium, spleen and osteoblasts.

It is found in the secreted. The protein resides in the extracellular space. It localises to the extracellular matrix. Its function is as follows. Promotes cell adhesion and matrix assembly. This Homo sapiens (Human) protein is Coiled-coil domain-containing protein 80 (CCDC80).